Here is a 159-residue protein sequence, read N- to C-terminus: Small ribosomal subunit protein bS6 (159 aa).

Over residues 93 to 151 the composition is skewed to basic and acidic residues; the sequence is VDEHEEGPSAMMRKADRDRERDDRGPREGGFRGDREGRGDREGGGFRGDRGPRRPREDA. The disordered stretch occupies residues 93-159; that stretch reads VDEHEEGPSA…DADTAAASEE (67 aa).

Belongs to the bacterial ribosomal protein bS6 family.

In terms of biological role, binds together with bS18 to 16S ribosomal RNA. The protein is Small ribosomal subunit protein bS6 of Rhodopseudomonas palustris (strain HaA2).